The following is a 677-amino-acid chain: DNA ligase (677 aa).

NAD(+)-binding positions include 43–47, 92–93, and E122; these read DHVYD and SM. K124 acts as the N6-AMP-lysine intermediate in catalysis. NAD(+)-binding residues include R145, E179, K295, and K319. Residues C413, C416, C431, and C436 each contribute to the Zn(2+) site. Residues 599 to 677 enclose the BRCT domain; it reads TSDSYFNGKT…EADLDNYLAQ (79 aa).

This sequence belongs to the NAD-dependent DNA ligase family. LigA subfamily. The cofactor is Mg(2+). Mn(2+) is required as a cofactor.

It catalyses the reaction NAD(+) + (deoxyribonucleotide)n-3'-hydroxyl + 5'-phospho-(deoxyribonucleotide)m = (deoxyribonucleotide)n+m + AMP + beta-nicotinamide D-nucleotide.. Its function is as follows. DNA ligase that catalyzes the formation of phosphodiester linkages between 5'-phosphoryl and 3'-hydroxyl groups in double-stranded DNA using NAD as a coenzyme and as the energy source for the reaction. It is essential for DNA replication and repair of damaged DNA. In Latilactobacillus sakei subsp. sakei (strain 23K) (Lactobacillus sakei subsp. sakei), this protein is DNA ligase.